A 400-amino-acid polypeptide reads, in one-letter code: Lipase member N (400 aa).

A signal peptide spans 1 to 19; the sequence is MPMMWLFLTTACLIPGTLS. An AB hydrolase-1 domain is found at 81-381; it reads PVVYMQHALF…DWNHFDFVWG (301 aa). The Nucleophile role is filled by Ser175. A disulfide bond links Cys249 and Cys258. An N-linked (GlcNAc...) asparagine glycan is attached at Asn274. Catalysis depends on charge relay system residues Asp346 and His375.

Belongs to the AB hydrolase superfamily. Lipase family. Highly expressed in the epidermis. Also detected in other tissues, although at much lower levels, including liver and kidney.

It localises to the secreted. The catalysed reaction is a sterol ester + H2O = a sterol + a fatty acid + H(+). It carries out the reaction a triacylglycerol + H2O = a 1,2-diacylglycerol + a fatty acid + H(+). The enzyme catalyses a triacylglycerol + H2O = a diacylglycerol + a fatty acid + H(+). It catalyses the reaction a cholesterol ester + H2O = cholesterol + a fatty acid + H(+). Its function is as follows. Plays a highly specific role in the last step of keratinocyte differentiation. Contains two distinct domains: the alpha/beta hydrolase fold and the abhydrolase-associated lipase region, also features the consensus sequence of the active site of a genuine lipase. May have an essential function in lipid metabolism of the most differentiated epidermal layers. The protein is Lipase member N (Lipn) of Mus musculus (Mouse).